A 471-amino-acid chain; its full sequence is Glycosyl hydrolase family 109 protein 1 (471 aa).

An N-terminal signal peptide occupies residues 1 to 15 (MIKNLSTFFVGIALS). Cysteine 16 is lipidated: N-palmitoyl cysteine. A lipid anchor (S-diacylglycerol cysteine) is attached at cysteine 16. NAD(+) contacts are provided by residues 70 to 71 (MR), aspartate 92, 141 to 144 (WKHH), 161 to 162 (EV), and asparagine 190. Residues tyrosine 219, arginine 235, 247-250 (YATH), and tyrosine 325 contribute to the substrate site. Residue tyrosine 247 coordinates NAD(+).

It belongs to the Gfo/Idh/MocA family. Glycosyl hydrolase 109 subfamily. It depends on NAD(+) as a cofactor.

The protein resides in the cell membrane. Its function is as follows. Glycosidase. The chain is Glycosyl hydrolase family 109 protein 1 from Phocaeicola vulgatus (strain ATCC 8482 / DSM 1447 / JCM 5826 / CCUG 4940 / NBRC 14291 / NCTC 11154) (Bacteroides vulgatus).